Reading from the N-terminus, the 274-residue chain is MRHFIYQDEKSHKFRAVEQQGNELHISWGKVGTKGQSQIKSFSDAAAAAKAELKLIAEKVKKGYVEQAKDNSLQPSQTVTGSLKVADLSTIIQEQPSFVAETRAPDKNTDAVLPWLAKDIAVVFPPEVVHTTLSHRRFPGVPVQQADKLPQLRRLACSVSQRDNKTATFDFSACSLEWQNTVAQAISQIDGLKTTQLPSPVMAVLTALEMKCTRYKVREDVMDQIVQEGGLEYATDVIIHLQQIDIEWDYANNVIIILPSGIAPSYLEQYSRFE.

One can recognise a WGR domain in the interval 2 to 78; that stretch reads RHFIYQDEKS…KDNSLQPSQT (77 aa).

Has been implicated in selenate reduction; a mini-Tn10 insertion mutant in 'molR', (which was mapped to 47.3 centisomes i.e. this locus), is defective in the reduction of selenate. This is Protein YehF (yehF) from Escherichia coli (strain K12).